The primary structure comprises 69 residues: Putative membrane protein insertion efficiency factor (69 aa).

This sequence belongs to the UPF0161 family.

It is found in the cell membrane. Could be involved in insertion of integral membrane proteins into the membrane. This is Putative membrane protein insertion efficiency factor from Desulfitobacterium hafniense (strain Y51).